Reading from the N-terminus, the 813-residue chain is Protein translocase subunit SecA 2 (813 aa).

Residues glutamine 105, 123-127 (GEGKT), and aspartate 525 each bind ATP.

It belongs to the SecA family. As to quaternary structure, monomer and homodimer. Part of the essential Sec protein translocation apparatus which comprises SecA, SecYEG and auxiliary proteins SecDF-YajC and YidC.

The protein localises to the cell inner membrane. Its subcellular location is the cytoplasm. The catalysed reaction is ATP + H2O + cellular proteinSide 1 = ADP + phosphate + cellular proteinSide 2.. In terms of biological role, part of the Sec protein translocase complex. Interacts with the SecYEG preprotein conducting channel. Has a central role in coupling the hydrolysis of ATP to the transfer of proteins into and across the cell membrane, serving both as a receptor for the preprotein-SecB complex and as an ATP-driven molecular motor driving the stepwise translocation of polypeptide chains across the membrane. This chain is Protein translocase subunit SecA 2, found in Rhodopseudomonas palustris (strain BisA53).